The primary structure comprises 196 residues: Chorion protein S19 (196 aa).

Residues 1 to 16 (MNTFATLAIFISACLA) form the signal peptide.

Belongs to the chorion protein S19 family.

It localises to the secreted. Its function is as follows. Chorion membrane (egg shell) protein; plays a role in protecting the egg from the environment. This Drosophila grimshawi (Hawaiian fruit fly) protein is Chorion protein S19 (Cp19).